We begin with the raw amino-acid sequence, 120 residues long: MVNETGESQKAAKGTPVSGKVWKAEKTPLRAKSRVVKNKKLTSWELKKQKRLEDKQFKERLKALKDEKEEARQAKITMLKERREKKEENERYERLAAKMHAKKVERMRRREKRNKALKER.

Disordered stretches follow at residues 1–26 and 81–120; these read MVNE…KAEK and ERRE…LKER. Residues 47–106 adopt a coiled-coil conformation; sequence KKQKRLEDKQFKERLKALKDEKEEARQAKITMLKERREKKEENERYERLAAKMHAKKVER. Positions 81-96 are enriched in basic and acidic residues; sequence ERREKKEENERYERLA. Basic residues predominate over residues 97–113; the sequence is AKMHAKKVERMRRREKR.

It belongs to the CGR1 family.

The protein localises to the nucleus. The protein resides in the nucleolus. Involved in nucleolar integrity and required for processing of the pre-rRNA for the 60S ribosome subunit. This Saccharomyces cerevisiae (strain ATCC 204508 / S288c) (Baker's yeast) protein is rRNA-processing protein CGR1 (CGR1).